The following is a 415-amino-acid chain: Acetyl-CoA acetyltransferase 1 (415 aa).

Cys99 functions as the Acyl-thioester intermediate in the catalytic mechanism. Lys239 provides a ligand contact to CoA. Residue Ala256 coordinates K(+). Residue Ser260 participates in CoA binding. Val357 is a K(+) binding site. Residues His361 and Cys391 each act as proton acceptor in the active site.

This sequence belongs to the thiolase-like superfamily. Thiolase family. In terms of tissue distribution, expressed in the vascular system of roots, cotyledons, young leaves, fully expanded leaves, stems, flowers, and funiculi of siliques.

The protein localises to the cytoplasm. The protein resides in the peroxisome. The catalysed reaction is 2 acetyl-CoA = acetoacetyl-CoA + CoA. It participates in metabolic intermediate biosynthesis; (R)-mevalonate biosynthesis; (R)-mevalonate from acetyl-CoA: step 1/3. Functionally, catalyzes the condensation of two molecules of acetyl-CoA to produce acetoacetyl-CoA. The polypeptide is Acetyl-CoA acetyltransferase 1 (Arabidopsis thaliana (Mouse-ear cress)).